We begin with the raw amino-acid sequence, 73 residues long: UPF0346 protein Lreu_0775 (73 aa).

The protein belongs to the UPF0346 family.

In Limosilactobacillus reuteri (strain DSM 20016) (Lactobacillus reuteri), this protein is UPF0346 protein Lreu_0775.